The sequence spans 179 residues: MQRQNFRPPTPPYPGPGGGGWGSGSSFRGTPGGGGPRPPSPRDGYGSPHHTPPYGPRSRPYGSSHSPRHGGSFPGGRFGSPSPGGYPGSYSRSPAGSQQQFGYSPGQQQTHPQGSPRTSTPFGSGRVREKRMSNELENYFKPSMLEDPWAGLEPVSVVDISQQYSNTQTFTGKKGRYFC.

A disordered region spans residues 1–135; it reads MQRQNFRPPT…RVREKRMSNE (135 aa). R37 is subject to Asymmetric dimethylarginine. Phosphoserine occurs at positions 40 and 47. Residue T51 is modified to Phosphothreonine. R57 is modified (omega-N-methylarginine). R59 and R68 each carry asymmetric dimethylarginine. Low complexity predominate over residues 60 to 71; that stretch reads PYGSSHSPRHGG. Phosphoserine is present on S72. Asymmetric dimethylarginine is present on R77. Residues 79 to 109 are compositionally biased toward low complexity; the sequence is GSPSPGGYPGSYSRSPAGSQQQFGYSPGQQQ. Phosphoserine occurs at positions 80, 82, 93, 104, and 115. Residues 110 to 122 show a composition bias toward polar residues; the sequence is THPQGSPRTSTPF. R117 is modified (omega-N-methylarginine). T120 is modified (phosphothreonine). Phosphoserine is present on residues S124 and S133.

In terms of assembly, interacts with PLK1; phosphorylation-dependent. Post-translationally, phosphorylated during mitosis in the cell cycle probably by CDK1. As to expression, expressed at highest levels in liver and kidney; intermediate expression in skeletal muscle, pancreas, heart and placenta; low expression in brain and lung. Expressed in epidermis and hair follicles.

It is found in the nucleus. Its subcellular location is the cytoplasm. The protein resides in the cytoskeleton. The protein localises to the microtubule organizing center. It localises to the centrosome. Its function is as follows. May play a role in maintenance of cell cycle integrity by regulating mitosis or cytokinesis. The chain is M-phase-specific PLK1-interacting protein (MPLKIP) from Homo sapiens (Human).